The primary structure comprises 1060 residues: Histone lysine demethylase PHF8 (1060 aa).

The PHD-type zinc finger occupies 41–92; the sequence is PVYCLCRLPYDVTRFMIECDMCQDWFHGSCVGVEEEKAADIDLYHCPNCEVL. Residue Ser-69 is modified to Phosphoserine; by CDK1. The disordered stretch occupies residues 100–120; the sequence is KRRGSSKGHDTHKGKPVKTGS. The interval 101–115 is linker; it reads RRGSSKGHDTHKGKP. At Ser-120 the chain carries Phosphoserine; by CDK1. The 157-residue stretch at 231–387 folds into the JmjC domain; it reads FSDTRLSNLV…MQLKAYEIEK (157 aa). Thr-280 contributes to the substrate binding site. 2 residues coordinate Fe cation: His-283 and Asp-285. Residue Lys-300 coordinates substrate. His-355 contacts Fe cation. Residues 508-517 are compositionally biased toward polar residues; that stretch reads AHSTSVSMSR. The segment at 508-534 is disordered; sequence AHSTSVSMSRLSLPSKNGSKKKGLKPK. A Phosphoserine modification is found at Ser-651. Tyr-704 is modified (phosphotyrosine). Phosphothreonine is present on residues Thr-705 and Thr-706. Position 722 is a phosphoserine (Ser-722). 3 disordered regions span residues 768–840, 852–902, and 915–1046; these read QSSS…EQDS, YPSL…GTRV, and KLAQ…KQRL. Low complexity-rich tracts occupy residues 769 to 778 and 785 to 804; these read SSSSSPATSS and GGQD…VSNS. Phosphoserine occurs at positions 804, 826, 834, 854, 857, and 880. The segment covering 826-839 has biased composition (acidic residues); the sequence is SEEEEENASLDEQD. Basic and acidic residues predominate over residues 891 to 900; it reads KQDRPVREGT. Residues 924–934 are compositionally biased toward basic residues; that stretch reads AQKKKYIKKKP. The span at 1018–1030 shows a compositional bias: polar residues; the sequence is RRPSVGSQSNQAG.

This sequence belongs to the JHDM1 histone demethylase family. JHDM1D subfamily. As to quaternary structure, interacts with POLR1B, UBTF, SETD1A, HCFC1, E2F1 and ZNF711. Interacts with ZNF263; recruited to the SIX3 promoter along with other proteins involved in chromatin modification and transcriptional corepression where it contributes to transcriptional repression. Fe(2+) serves as cofactor. In terms of processing, phosphorylation at Ser-69 and Ser-120 are required for dissociation from chromatin and accumulation of H4K20Me1 levels during prophase.

The protein localises to the nucleus. The protein resides in the nucleolus. The enzyme catalyses N(6),N(6)-dimethyl-L-lysyl(36)-[histone H3] + 2 2-oxoglutarate + 2 O2 = L-lysyl(36)-[histone H3] + 2 formaldehyde + 2 succinate + 2 CO2. It carries out the reaction N(6),N(6)-dimethyl-L-lysyl(9)-[histone H3] + 2 2-oxoglutarate + 2 O2 = L-lysyl(9)-[histone H3] + 2 formaldehyde + 2 succinate + 2 CO2. Histone lysine demethylase with selectivity for the di- and monomethyl states that plays a key role cell cycle progression, rDNA transcription and brain development. Demethylates mono- and dimethylated histone H3 'Lys-9' residue (H3K9Me1 and H3K9Me2), dimethylated H3 'Lys-27' (H3K27Me2) and monomethylated histone H4 'Lys-20' residue (H4K20Me1). Acts as a transcription activator as H3K9Me1, H3K9Me2, H3K27Me2 and H4K20Me1 are epigenetic repressive marks. Involved in cell cycle progression by being required to control G1-S transition. Acts as a coactivator of rDNA transcription, by activating polymerase I (pol I) mediated transcription of rRNA genes. Required for brain development, probably by regulating expression of neuron-specific genes. Only has activity toward H4K20Me1 when nucleosome is used as a substrate and when not histone octamer is used as substrate. May also have weak activity toward dimethylated H3 'Lys-36' (H3K36Me2), however, the relevance of this result remains unsure in vivo. Specifically binds trimethylated 'Lys-4' of histone H3 (H3K4me3), affecting histone demethylase specificity: has weak activity toward H3K9Me2 in absence of H3K4me3, while it has high activity toward H3K9me2 when binding H3K4me3. Positively modulates transcription of histone demethylase KDM5C, acting synergistically with transcription factor ARX; synergy may be related to enrichment of histone H3K4me3 in regulatory elements. The protein is Histone lysine demethylase PHF8 (PHF8) of Homo sapiens (Human).